We begin with the raw amino-acid sequence, 459 residues long: uncharacterized protein (459 aa).

The 59-residue stretch at 5-63 (PVEEGQKFPLTIRRMGINGEGIGYFKKAVVFVPGAITGEEVVVEAVKVRDRFTEAKLNK) folds into the TRAM domain. The [4Fe-4S] cluster site is built by cysteine 76, cysteine 82, cysteine 85, and cysteine 166. Residues glutamine 290, tyrosine 319, aspartate 340, and aspartate 388 each coordinate S-adenosyl-L-methionine. The active-site Nucleophile is the cysteine 415.

It belongs to the class I-like SAM-binding methyltransferase superfamily. RNA M5U methyltransferase family.

This is an uncharacterized protein from Listeria monocytogenes serotype 4b (strain F2365).